The sequence spans 245 residues: Protein virB1 (245 aa).

The signal sequence occupies residues 1–28; sequence MLKATGPLSIILLASTCPSSGAAPLSFA. Positions 176–245 are disordered; the sequence is LVPPLTARPK…LFDLNQGGPQ (70 aa). The segment covering 183-193 has biased composition (basic and acidic residues); sequence RPKDDREKPGS.

This sequence belongs to the virb1 family.

VirB proteins are suggested to act at the bacterial surface and there play an important role in directing T-DNA transfer to plant cells. This Agrobacterium fabrum (strain C58 / ATCC 33970) (Agrobacterium tumefaciens (strain C58)) protein is Protein virB1 (virB1).